A 209-amino-acid chain; its full sequence is Large ribosomal subunit protein uL3 (209 aa).

Belongs to the universal ribosomal protein uL3 family. Part of the 50S ribosomal subunit. Forms a cluster with proteins L14 and L19.

One of the primary rRNA binding proteins, it binds directly near the 3'-end of the 23S rRNA, where it nucleates assembly of the 50S subunit. The protein is Large ribosomal subunit protein uL3 of Desulfotalea psychrophila (strain LSv54 / DSM 12343).